We begin with the raw amino-acid sequence, 377 residues long: Phospho-N-acetylmuramoyl-pentapeptide-transferase (377 aa).

Transmembrane regions (helical) follow at residues 27–47 (TAFA…YVIE), 71–91 (GTPT…TLLW), 94–114 (LSDP…AIGF), 139–159 (ILAS…GSYS), 182–202 (VPHL…IVIV), 216–236 (GLAI…TYVS), 252–272 (MVGE…GFLW), 280–300 (IFMG…VAVV), 305–325 (LLLP…ILQV), and 354–374 (KVIV…LTTL).

Belongs to the glycosyltransferase 4 family. MraY subfamily. It depends on Mg(2+) as a cofactor.

It localises to the cell inner membrane. The enzyme catalyses UDP-N-acetyl-alpha-D-muramoyl-L-alanyl-gamma-D-glutamyl-meso-2,6-diaminopimeloyl-D-alanyl-D-alanine + di-trans,octa-cis-undecaprenyl phosphate = di-trans,octa-cis-undecaprenyl diphospho-N-acetyl-alpha-D-muramoyl-L-alanyl-D-glutamyl-meso-2,6-diaminopimeloyl-D-alanyl-D-alanine + UMP. Its pathway is cell wall biogenesis; peptidoglycan biosynthesis. In terms of biological role, catalyzes the initial step of the lipid cycle reactions in the biosynthesis of the cell wall peptidoglycan: transfers peptidoglycan precursor phospho-MurNAc-pentapeptide from UDP-MurNAc-pentapeptide onto the lipid carrier undecaprenyl phosphate, yielding undecaprenyl-pyrophosphoryl-MurNAc-pentapeptide, known as lipid I. This Acidobacterium capsulatum (strain ATCC 51196 / DSM 11244 / BCRC 80197 / JCM 7670 / NBRC 15755 / NCIMB 13165 / 161) protein is Phospho-N-acetylmuramoyl-pentapeptide-transferase.